Consider the following 576-residue polypeptide: Protein NRT1/ PTR FAMILY 2.12 (576 aa).

The next 11 membrane-spanning stretches (helical) occupy residues 58–78 (FNVY…GALI), 89–109 (IAYA…TACL), 130–150 (KLQL…SGGI), 176–196 (FFNW…TVVV), 203–223 (WVIG…LFFV), 329–349 (VWSA…FMVF), 364–384 (IPAA…VPIY), 406–426 (MGIG…VEGV), 441–461 (WLAL…IGLI), 475–495 (IANS…SLLV), and 522–542 (YFYY…WYCA).

The protein belongs to the major facilitator superfamily. Proton-dependent oligopeptide transporter (POT/PTR) (TC 2.A.17) family. In terms of tissue distribution, expressed in flowers and siliques. Expressed in vascular bundle of the siliques and in funiculus.

Its subcellular location is the cell membrane. Low-affinity proton-dependent nitrate transporter. Not involved in dipeptides transport. Involved in delivering nitrate for seed development. This is Protein NRT1/ PTR FAMILY 2.12 (NPF2.12) from Arabidopsis thaliana (Mouse-ear cress).